Here is a 101-residue protein sequence, read N- to C-terminus: Small ribosomal subunit protein uS14 (101 aa).

It belongs to the universal ribosomal protein uS14 family. As to quaternary structure, part of the 30S ribosomal subunit. Contacts proteins S3 and S10.

Its function is as follows. Binds 16S rRNA, required for the assembly of 30S particles and may also be responsible for determining the conformation of the 16S rRNA at the A site. In Francisella tularensis subsp. holarctica (strain FTNF002-00 / FTA), this protein is Small ribosomal subunit protein uS14.